Here is a 128-residue protein sequence, read N- to C-terminus: Small ribosomal subunit protein uS13 (128 aa).

Residues 98–128 (VRGQRTRTNARTRKGPRPRIGVKKKGKQAGS) form a disordered region. A compositionally biased stretch (basic residues) spans 101–128 (QRTRTNARTRKGPRPRIGVKKKGKQAGS).

Belongs to the universal ribosomal protein uS13 family. In terms of assembly, part of the 30S ribosomal subunit. Forms a loose heterodimer with protein S19. Forms two bridges to the 50S subunit in the 70S ribosome.

Its function is as follows. Located at the top of the head of the 30S subunit, it contacts several helices of the 16S rRNA. In the 70S ribosome it contacts the 23S rRNA (bridge B1a) and protein L5 of the 50S subunit (bridge B1b), connecting the 2 subunits; these bridges are implicated in subunit movement. Contacts the tRNAs in the A and P-sites. The sequence is that of Small ribosomal subunit protein uS13 from Thermomicrobium roseum (strain ATCC 27502 / DSM 5159 / P-2).